A 250-amino-acid polypeptide reads, in one-letter code: Mediator of RNA polymerase II transcription subunit 6 (250 aa).

The segment at 166-250 (KKREEEKKED…EPTARTTSKQ (85 aa)) is disordered. The span at 204–223 (PAEDALEREEKEEVEEEEEE) shows a compositional bias: acidic residues. Residues 224–239 (TLKTEEPTTSTDEPKF) are compositionally biased toward basic and acidic residues.

This sequence belongs to the Mediator complex subunit 6 family. As to quaternary structure, component of the Mediator complex. Interacts with let-19/mdt-13. Interacts with RNA polymerase II. Interacts with mdt-28.

It localises to the nucleus. Component of the Mediator complex, a coactivator involved in the regulated transcription of nearly all RNA polymerase II-dependent genes. Mediator functions as a bridge to convey information from gene-specific regulatory proteins to the basal RNA polymerase II transcription machinery. Mediator is recruited to promoters by direct interactions with regulatory proteins and serves as a scaffold for the assembly of a functional preinitiation complex with RNA polymerase II and the general transcription factors. Acts to repress beta-catenin target genes. Required for asymmetric division of T-cells and for gonad and germ cell development. The sequence is that of Mediator of RNA polymerase II transcription subunit 6 (mdt-6) from Caenorhabditis elegans.